Here is a 288-residue protein sequence, read N- to C-terminus: PAK4-inhibitor inka2 (288 aa).

Residues 159–196 (DPTDWTTSLLTRGRNRQPLVLGDNSFADLIKNWMDLPE) are inka box.

The protein belongs to the INKA family.

It is found in the nucleus. Its function is as follows. Inhibitor of the serine/threonine-protein kinase pak4/pak5. Acts by binding pak4/pak5 in a substrate-like manner, inhibiting the protein kinase activity. In Danio rerio (Zebrafish), this protein is PAK4-inhibitor inka2.